A 528-amino-acid chain; its full sequence is MHHVLRPIAFRLALVSPLRSLTITHHHLFFTKRTMASSARTYNDAIDALNSLQTPFAVIEARRKAGIRPDAHSVKEMRAYLARIGYSSQDLDRLNIVHVAGTKGKGGTCAFVDSILTRHQRTHGIPRRIGLFTSPHLIAVRERIRIDSKPISEELFARYFFEVWDRLETSQLAKDEVELGSKPIYARYLTLMSYHVYLSEGVDVAIYETGIGGEYDATNVVDRPVVSGISTLGIDHVFVLGDTVDKIAWHKAGIMKTGSPAFTIEQVPSATQVLKDRAVEKGVDLKILDVDPRLNGVKIRPDAVFQKKNATLAIALAETALKKLDPSFKPGTDSLSPEFVQGLEQVVWRGRCEVKEEDQAVWHLDGAHTVDSLKVAGRWFVEECVKKAKGGPKVLIFNQQGRSEAVDFLDGLCNTVKSADPEGTGFSHVIFCTNVTYATTGYKKDFVNHQYNPKDIENMTQQRVFAERWSTLDPSANVMLIPTIEEAINKARSLVDTTEGEQKVQALITGSLHLVGGALGILEKADAL.

104 to 107 (GKGG) lines the ATP pocket. Positions 134, 208, and 236 each coordinate Mg(2+). Positions 351 and 365 each coordinate ATP.

Belongs to the folylpolyglutamate synthase family. Requires a monovalent cation as cofactor.

It localises to the mitochondrion inner membrane. The protein localises to the mitochondrion matrix. Its subcellular location is the cytoplasm. It carries out the reaction (6S)-5,6,7,8-tetrahydrofolyl-(gamma-L-Glu)(n) + L-glutamate + ATP = (6S)-5,6,7,8-tetrahydrofolyl-(gamma-L-Glu)(n+1) + ADP + phosphate + H(+). The protein operates within cofactor biosynthesis; tetrahydrofolylpolyglutamate biosynthesis. In terms of biological role, catalyzes conversion of folates to polyglutamate derivatives allowing concentration of folate compounds in the cell and the intracellular retention of these cofactors, which are important substrates for most of the folate-dependent enzymes that are involved in one-carbon transfer reactions involved in purine, pyrimidine and amino acid synthesis. This is Folylpolyglutamate synthase (met-6) from Neurospora crassa (strain ATCC 24698 / 74-OR23-1A / CBS 708.71 / DSM 1257 / FGSC 987).